Reading from the N-terminus, the 447-residue chain is Tubulin beta-1 chain (447 aa).

GTP contacts are provided by Gln11, Glu69, Ser138, Gly142, Thr143, Gly144, Asn204, and Asn226. Glu69 serves as a coordination point for Mg(2+).

It belongs to the tubulin family. In terms of assembly, dimer of alpha and beta chains. A typical microtubule is a hollow water-filled tube with an outer diameter of 25 nm and an inner diameter of 15 nM. Alpha-beta heterodimers associate head-to-tail to form protofilaments running lengthwise along the microtubule wall with the beta-tubulin subunit facing the microtubule plus end conferring a structural polarity. Microtubules usually have 13 protofilaments but different protofilament numbers can be found in some organisms and specialized cells. Mg(2+) serves as cofactor.

Its subcellular location is the cytoplasm. The protein resides in the cytoskeleton. Functionally, tubulin is the major constituent of microtubules, a cylinder consisting of laterally associated linear protofilaments composed of alpha- and beta-tubulin heterodimers. Microtubules grow by the addition of GTP-tubulin dimers to the microtubule end, where a stabilizing cap forms. Below the cap, tubulin dimers are in GDP-bound state, owing to GTPase activity of alpha-tubulin. This is Tubulin beta-1 chain from Geotrichum candidum (Oospora lactis).